The primary structure comprises 263 residues: Isoprenyl transferase (263 aa).

D26 is a catalytic residue. D26 contacts Mg(2+). Residues 27-30 (GNGR), W31, R39, H43, and 71-73 (SSE) each bind substrate. Catalysis depends on N74, which acts as the Proton acceptor. Residues W75, R77, R191, and 197 to 199 (RIS) contribute to the substrate site. E210 serves as a coordination point for Mg(2+). The disordered stretch occupies residues 241 to 263 (GRTSEQIAGQQENKNTVSNEDRV). Polar residues predominate over residues 243–263 (TSEQIAGQQENKNTVSNEDRV).

The protein belongs to the UPP synthase family. In terms of assembly, homodimer. Requires Mg(2+) as cofactor.

Functionally, catalyzes the condensation of isopentenyl diphosphate (IPP) with allylic pyrophosphates generating different type of terpenoids. The sequence is that of Isoprenyl transferase from Nitrosomonas europaea (strain ATCC 19718 / CIP 103999 / KCTC 2705 / NBRC 14298).